A 220-amino-acid chain; its full sequence is VQ motif-containing protein 5 (220 aa).

The VQ motif lies at 49–57; the sequence is FKSLVQQLT. Disordered regions lie at residues 61 to 80 and 131 to 171; these read PCDRLPQNIPKHQDIRPEPI and HMMA…GASS. Polar residues-rich tracts occupy residues 133–150 and 157–171; these read MAQSQPQDPTQSMPQSNG and SWFNGSTQEMHGASS.

The protein localises to the nucleus. In terms of biological role, may function as negative regulator of plant defense. The chain is VQ motif-containing protein 5 from Arabidopsis thaliana (Mouse-ear cress).